A 250-amino-acid chain; its full sequence is Small ribosomal subunit protein uS2 (250 aa).

A disordered region spans residues 226–250 (DQQNRQELGEDLGAAVEPAAEEALA). A compositionally biased stretch (low complexity) spans 239 to 250 (AAVEPAAEEALA).

This sequence belongs to the universal ribosomal protein uS2 family.

The polypeptide is Small ribosomal subunit protein uS2 (rpsB) (Zymomonas mobilis subsp. mobilis (strain ATCC 31821 / ZM4 / CP4)).